Reading from the N-terminus, the 360-residue chain is MSQSLVISVDAMGGDHGPSIVVPGIAQALQALPGVRFLLHGDGAAIEAELAKHPGAKAVSEVRHCDKAIGMDEKPAQAMRRGKGSSMWNAVEAVRENEAQACVSAGNTGALMAISKLILRMGAELERPAIVANWPTMKGVTTVLDVGANVESDASQLVEFAIMGAAFHHAVHGSKRPTVGLLNVGSEDQKGHEEVREAHAILRETTLDFDYHGFVEGNDIAYGTVDVVVTDGFTGNVALKTAEGLARFFSNEIKSTLTSGPLAMLGALIASGALKKMRHRLDPSRVNGAPLLGLNGIVVKSHGGADANGFASAIRVATNLARSDFRAEIDRNLKRLTATAAAIKSGDGQGPGEDAQGVAE.

Belongs to the PlsX family. Homodimer. Probably interacts with PlsY.

The protein resides in the cytoplasm. It carries out the reaction a fatty acyl-[ACP] + phosphate = an acyl phosphate + holo-[ACP]. Its pathway is lipid metabolism; phospholipid metabolism. In terms of biological role, catalyzes the reversible formation of acyl-phosphate (acyl-PO(4)) from acyl-[acyl-carrier-protein] (acyl-ACP). This enzyme utilizes acyl-ACP as fatty acyl donor, but not acyl-CoA. This Caulobacter vibrioides (strain ATCC 19089 / CIP 103742 / CB 15) (Caulobacter crescentus) protein is Phosphate acyltransferase.